A 533-amino-acid polypeptide reads, in one-letter code: Retinoid isomerohydrolase (533 aa).

Cys-112 carries the S-palmitoyl cysteine; in membrane form lipid modification. The residue at position 117 (Ser-117) is a Phosphoserine. Position 180 (His-180) interacts with Fe cation. The S-palmitoyl cysteine; in membrane form moiety is linked to residue Cys-231. Fe cation is bound by residues His-241 and His-313. Residue Cys-329 is the site of S-palmitoyl cysteine; in membrane form attachment. His-527 provides a ligand contact to Fe cation.

The protein belongs to the carotenoid oxygenase family. Requires Fe(2+) as cofactor. Palmitoylation by LRAT regulates ligand binding specificity; the palmitoylated form (membrane form) specifically binds all-trans-retinyl-palmitate, while the soluble unpalmitoylated form binds all-trans-retinol (vitamin A). In terms of tissue distribution, retinal pigment epithelium specific.

Its subcellular location is the cytoplasm. The protein localises to the cell membrane. It is found in the microsome membrane. The catalysed reaction is an all-trans-retinyl ester + H2O = 11-cis-retinol + a fatty acid + H(+). It catalyses the reaction lutein = (3R,3'S)-zeaxanthin. The enzyme catalyses all-trans-retinyl hexadecanoate + H2O = 11-cis-retinol + hexadecanoate + H(+). Functionally, critical isomerohydrolase in the retinoid cycle involved in regeneration of 11-cis-retinal, the chromophore of rod and cone opsins. Catalyzes the cleavage and isomerization of all-trans-retinyl fatty acid esters to 11-cis-retinol which is further oxidized by 11-cis retinol dehydrogenase to 11-cis-retinal for use as visual chromophore. Essential for the production of 11-cis retinal for both rod and cone photoreceptors. Also capable of catalyzing the isomerization of lutein to meso-zeaxanthin an eye-specific carotenoid. The soluble form binds vitamin A (all-trans-retinol), making it available for LRAT processing to all-trans-retinyl ester. The membrane form, palmitoylated by LRAT, binds all-trans-retinyl esters, making them available for IMH (isomerohydrolase) processing to all-cis-retinol. The soluble form is regenerated by transferring its palmitoyl groups onto 11-cis-retinol, a reaction catalyzed by LRAT. The polypeptide is Retinoid isomerohydrolase (RPE65) (Gallus gallus (Chicken)).